Consider the following 122-residue polypeptide: Large ribosomal subunit protein uL14 (122 aa).

This sequence belongs to the universal ribosomal protein uL14 family. In terms of assembly, part of the 50S ribosomal subunit. Forms a cluster with proteins L3 and L19. In the 70S ribosome, L14 and L19 interact and together make contacts with the 16S rRNA in bridges B5 and B8.

In terms of biological role, binds to 23S rRNA. Forms part of two intersubunit bridges in the 70S ribosome. This Ureaplasma parvum serovar 3 (strain ATCC 27815 / 27 / NCTC 11736) protein is Large ribosomal subunit protein uL14.